The following is a 470-amino-acid chain: Rhamnulokinase (470 aa).

ATP is bound at residue 12–16 (ASSGR). Residues A80 and 237–239 (HDT) contribute to the substrate site. The active-site Proton acceptor is the D238. T259 provides a ligand contact to ATP. Residue N296 coordinates substrate. Q304 lines the ATP pocket. An intrachain disulfide couples C353 to C370. Position 402 (G402) interacts with ATP.

The protein belongs to the rhamnulokinase family. Requires Mg(2+) as cofactor.

It carries out the reaction L-rhamnulose + ATP = L-rhamnulose 1-phosphate + ADP + H(+). The protein operates within carbohydrate degradation; L-rhamnose degradation; glycerone phosphate from L-rhamnose: step 2/3. Its function is as follows. Involved in the catabolism of L-rhamnose (6-deoxy-L-mannose). Catalyzes the transfer of the gamma-phosphate group from ATP to the 1-hydroxyl group of L-rhamnulose to yield L-rhamnulose 1-phosphate. The sequence is that of Rhamnulokinase from Oceanobacillus iheyensis (strain DSM 14371 / CIP 107618 / JCM 11309 / KCTC 3954 / HTE831).